The following is a 265-amino-acid chain: Thymidine kinase 2, mitochondrial (265 aa).

The N-terminal 33 residues, 1–33 (MLLWPLRGWAARALRCFGPGSRGSPASGPGPRR), are a transit peptide targeting the mitochondrion. A compositionally biased stretch (low complexity) spans 20 to 32 (GSRGSPASGPGPR). Residues 20-47 (GSRGSPASGPGPRRVQRRAWPPDKEQEK) are disordered. ATP is bound at residue 57–65 (GNIASGKTT). The Proton acceptor role is filled by glutamate 133.

It belongs to the DCK/DGK family. As to quaternary structure, monomer. As to expression, predominantly expressed in liver, pancreas, muscle, and brain.

The protein resides in the mitochondrion. The enzyme catalyses thymidine + ATP = dTMP + ADP + H(+). The catalysed reaction is 2'-deoxycytidine + ATP = dCMP + ADP + H(+). It carries out the reaction 2'-deoxyuridine + ATP = dUMP + ADP + H(+). In terms of biological role, phosphorylates thymidine, deoxycytidine, and deoxyuridine in the mitochondrial matrix. In non-replicating cells, where cytosolic dNTP synthesis is down-regulated, mtDNA synthesis depends solely on TK2 and DGUOK. Widely used as target of antiviral and chemotherapeutic agents. The sequence is that of Thymidine kinase 2, mitochondrial from Homo sapiens (Human).